Here is a 448-residue protein sequence, read N- to C-terminus: ATP-dependent RNA helicase sub2 (448 aa).

Low complexity predominate over residues 19–29 (DAAATTAAPAA). The interval 19–43 (DAAATTAAPAANGAQDKKGDLTVSG) is disordered. The short motif at 58-86 (TGFRDFLLKGELLRAITDCGFEHPSEVQQ) is the Q motif element. The 183-residue stretch at 89–271 (IPTAILNVDV…KKFMRNPLEV (183 aa)) folds into the Helicase ATP-binding domain. 102 to 109 (AKSGLGKT) is a binding site for ATP. Positions 211-214 (DECD) match the DECD box motif. Positions 283 to 444 (GLQQYYIKLS…EYPEGGVDSS (162 aa)) constitute a Helicase C-terminal domain.

Belongs to the DEAD box helicase family. DECD subfamily.

Its subcellular location is the nucleus. It catalyses the reaction ATP + H2O = ADP + phosphate + H(+). In terms of biological role, ATP-binding RNA helicase involved in transcription elongation and required for the export of mRNA out of the nucleus. SUB2 also plays a role in pre-mRNA splicing and spliceosome assembly. May be involved in rDNA and telomeric silencing, and maintenance of genome integrity. The chain is ATP-dependent RNA helicase sub2 (sub2) from Aspergillus fumigatus (strain ATCC MYA-4609 / CBS 101355 / FGSC A1100 / Af293) (Neosartorya fumigata).